Here is a 475-residue protein sequence, read N- to C-terminus: 3-isopropylmalate dehydratase large subunit (475 aa).

Residues C349, C409, and C412 each contribute to the [4Fe-4S] cluster site.

The protein belongs to the aconitase/IPM isomerase family. LeuC type 1 subfamily. As to quaternary structure, heterodimer of LeuC and LeuD. Requires [4Fe-4S] cluster as cofactor.

The enzyme catalyses (2R,3S)-3-isopropylmalate = (2S)-2-isopropylmalate. Its pathway is amino-acid biosynthesis; L-leucine biosynthesis; L-leucine from 3-methyl-2-oxobutanoate: step 2/4. In terms of biological role, catalyzes the isomerization between 2-isopropylmalate and 3-isopropylmalate, via the formation of 2-isopropylmaleate. This Cereibacter sphaeroides (strain ATCC 17029 / ATH 2.4.9) (Rhodobacter sphaeroides) protein is 3-isopropylmalate dehydratase large subunit.